The chain runs to 302 residues: Sulfate adenylyltransferase subunit 2 (302 aa).

The tract at residues 280 to 302 (RQGRVIDHDQAGSMEQKKREGYF) is disordered.

It belongs to the PAPS reductase family. CysD subfamily. As to quaternary structure, heterodimer composed of CysD, the smaller subunit, and CysN.

It catalyses the reaction sulfate + ATP + H(+) = adenosine 5'-phosphosulfate + diphosphate. It functions in the pathway sulfur metabolism; hydrogen sulfide biosynthesis; sulfite from sulfate: step 1/3. With CysN forms the ATP sulfurylase (ATPS) that catalyzes the adenylation of sulfate producing adenosine 5'-phosphosulfate (APS) and diphosphate, the first enzymatic step in sulfur assimilation pathway. APS synthesis involves the formation of a high-energy phosphoric-sulfuric acid anhydride bond driven by GTP hydrolysis by CysN coupled to ATP hydrolysis by CysD. The chain is Sulfate adenylyltransferase subunit 2 from Hahella chejuensis (strain KCTC 2396).